Consider the following 775-residue polypeptide: tRNA(Met) cytidine acetyltransferase TmcA (775 aa).

Disordered regions lie at residues 1-33 and 191-215; these read MPTTVSGPIKSVPGERRDRQVHTGASATTGMDI and TVEQDGLTDPPPSRPVPSPTPPTDA. The segment covering 199 to 212 has biased composition (pro residues); that stretch reads DPPPSRPVPSPTPP. ATP-binding positions include Q230, 254-263, and R403; that span reads GRGKSSAAGL. An N-acetyltransferase domain is found at 438–623; that stretch reads VEYRQLSAAD…YSVVMLDPCS (186 aa). Residues 549–551, 556–562, and E588 contribute to the acetyl-CoA site; these read IAT and RSRGLGS.

The protein belongs to the RNA cytidine acetyltransferase family. TmcA subfamily.

The protein localises to the cytoplasm. The enzyme catalyses cytidine(34) in elongator tRNA(Met) + acetyl-CoA + ATP + H2O = N(4)-acetylcytidine(34) in elongator tRNA(Met) + ADP + phosphate + CoA + H(+). Catalyzes the formation of N(4)-acetylcytidine (ac(4)C) at the wobble position of tRNA(Met), by using acetyl-CoA as an acetyl donor and ATP (or GTP). The protein is tRNA(Met) cytidine acetyltransferase TmcA of Haloarcula marismortui (strain ATCC 43049 / DSM 3752 / JCM 8966 / VKM B-1809) (Halobacterium marismortui).